Here is a 289-residue protein sequence, read N- to C-terminus: Protoheme IX farnesyltransferase (289 aa).

Transmembrane regions (helical) follow at residues 13 to 33 (LIKPRVTSLVLATIIPGLYLA), 40 to 60 (VFLITVTLFGTFLMSSASFIF), 85 to 105 (ISIPQATLVGISMMGLSFYML), 111 to 131 (LLTALCALTALISYVFLYTIF), 139 to 159 (NIVIGGVAGCVGPLIGYAAIG), 168 to 188 (ILFTMIFLWTPAHFWALAIFL), 212 to 232 (SIFFYTILYSLSCVSFYFLEP), 234 to 254 (MGLLYLVIVLLVCIWMGILSY), and 269 to 289 (FLFSIFHLFLINITIVVDHMI).

This sequence belongs to the UbiA prenyltransferase family. Protoheme IX farnesyltransferase subfamily.

It is found in the cell inner membrane. The catalysed reaction is heme b + (2E,6E)-farnesyl diphosphate + H2O = Fe(II)-heme o + diphosphate. Its pathway is porphyrin-containing compound metabolism; heme O biosynthesis; heme O from protoheme: step 1/1. Converts heme B (protoheme IX) to heme O by substitution of the vinyl group on carbon 2 of heme B porphyrin ring with a hydroxyethyl farnesyl side group. The polypeptide is Protoheme IX farnesyltransferase (Leptospira borgpetersenii serovar Hardjo-bovis (strain JB197)).